The following is a 532-amino-acid chain: Muscarinic acetylcholine receptor M5 (532 aa).

Over 1-29 (MEGESYHNETTVNGTPVNHQALERHGLWE) the chain is Extracellular. N-linked (GlcNAc...) asparagine glycosylation is present at Asn-8. A helical membrane pass occupies residues 30–53 (VITIAAVTAVVSLMTIVGNVLVMI). The Cytoplasmic segment spans residues 54–66 (SFKVNSQLKTVNN). A helical transmembrane segment spans residues 67-87 (YYLLSLACADLIIGIFSMNLY). Residues 88–104 (TTYILMGRWVLGSLACD) are Extracellular-facing. Cys-103 and Cys-183 form a disulfide bridge. Residues 105–126 (LWLALDYVASNASVMNLLVISF) traverse the membrane as a helical segment. The Cytoplasmic segment spans residues 127-146 (DRYFSITRPLTYRAKRTPKR). The chain crosses the membrane as a helical span at residues 147-169 (AGIMIGLAWLVSFILWAPAILCW). Residues 170–191 (QYLVGKRTVPPDECQIQFLSEP) are Extracellular-facing. A helical membrane pass occupies residues 192–214 (TITFGTAIAAFYIPVSVMTILYC). The Cytoplasmic portion of the chain corresponds to 215–443 (RIYRETEKRT…LVKERKAAQT (229 aa)). Positions 265-290 (VRNQASWSSSRRSTSTTGKPTQATDL) are disordered. Residues 270–281 (SWSSSRRSTSTT) are compositionally biased toward low complexity. Residues 444 to 464 (LSAILLAFIITWTPYNIMVLV) form a helical membrane-spanning segment. Topologically, residues 465–478 (STFCDKCVPVTLWH) are extracellular. The helical transmembrane segment at 479 to 498 (LGYWLCYVNSTINPICYALC) threads the bilayer. Residues 499 to 532 (NRTFRKTFKLLLLCRWKKKKVEEKLYWQGNSKLP) lie on the Cytoplasmic side of the membrane. Residues Thr-501 and Thr-505 each carry the phosphothreonine modification.

Belongs to the G-protein coupled receptor 1 family. Muscarinic acetylcholine receptor subfamily. CHRM5 sub-subfamily.

The protein resides in the cell membrane. It localises to the postsynaptic cell membrane. Functionally, the muscarinic acetylcholine receptor mediates various cellular responses, including inhibition of adenylate cyclase, breakdown of phosphoinositides and modulation of potassium channels through the action of G proteins. Primary transducing effect is Pi turnover. The chain is Muscarinic acetylcholine receptor M5 (Chrm5) from Mus musculus (Mouse).